Consider the following 293-residue polypeptide: Ribosomal protein L11 methyltransferase (293 aa).

Residues T145, G166, D188, and N230 each coordinate S-adenosyl-L-methionine.

Belongs to the methyltransferase superfamily. PrmA family.

It is found in the cytoplasm. It catalyses the reaction L-lysyl-[protein] + 3 S-adenosyl-L-methionine = N(6),N(6),N(6)-trimethyl-L-lysyl-[protein] + 3 S-adenosyl-L-homocysteine + 3 H(+). Functionally, methylates ribosomal protein L11. This Escherichia coli (strain SMS-3-5 / SECEC) protein is Ribosomal protein L11 methyltransferase.